We begin with the raw amino-acid sequence, 320 residues long: uncharacterized protein (320 aa).

The first 23 residues, 1–23, serve as a signal peptide directing secretion; that stretch reads MKLNLRFPSYFLPVVAASAFLVS. C24 carries N-palmitoyl cysteine lipidation. The S-diacylglycerol cysteine moiety is linked to residue C24. Residues 160–181 form a disordered region; that stretch reads KNHEHGHTHKNGETHEHDHDHH.

Its subcellular location is the cell membrane. This is an uncharacterized protein from Mycoplasma pneumoniae (strain ATCC 29342 / M129 / Subtype 1) (Mycoplasmoides pneumoniae).